We begin with the raw amino-acid sequence, 113 residues long: Large ribosomal subunit protein bL17 (113 aa).

It belongs to the bacterial ribosomal protein bL17 family. As to quaternary structure, part of the 50S ribosomal subunit. Contacts protein L32.

In Clostridium kluyveri (strain NBRC 12016), this protein is Large ribosomal subunit protein bL17.